The primary structure comprises 108 residues: UPF0145 protein YjfJ (108 aa).

It belongs to the UPF0145 family.

The sequence is that of UPF0145 protein YjfJ (yjfJ) from Lactococcus lactis subsp. lactis (strain IL1403) (Streptococcus lactis).